Here is a 663-residue protein sequence, read N- to C-terminus: DNA ligase 1 (663 aa).

NAD(+)-binding positions include 30–34 and 78–79; these read DAEYD and SL. The active-site N6-AMP-lysine intermediate is K105. NAD(+) is bound by residues R126, E161, and K294. Zn(2+) is bound by residues C389, C392, C407, and C412. A BRCT domain is found at 574–663; sequence AAGAPLAGKT…WAQLIEAKLV (90 aa).

It belongs to the NAD-dependent DNA ligase family. LigA subfamily. It depends on Mg(2+) as a cofactor. Mn(2+) is required as a cofactor.

It catalyses the reaction NAD(+) + (deoxyribonucleotide)n-3'-hydroxyl + 5'-phospho-(deoxyribonucleotide)m = (deoxyribonucleotide)n+m + AMP + beta-nicotinamide D-nucleotide.. In terms of biological role, DNA ligase that catalyzes the formation of phosphodiester linkages between 5'-phosphoryl and 3'-hydroxyl groups in double-stranded DNA using NAD as a coenzyme and as the energy source for the reaction. It is essential for DNA replication and repair of damaged DNA. This chain is DNA ligase 1, found in Nocardia farcinica (strain IFM 10152).